A 204-amino-acid polypeptide reads, in one-letter code: Holliday junction branch migration complex subunit RuvA (204 aa).

The interval 1–64 (MIGRLRGILL…EDAQLLYGFN (64 aa)) is domain I. The tract at residues 65-143 (TVKERALFRE…GWGAGDLFTP (79 aa)) is domain II. The segment at 144–155 (FTDAAPTDSAAA) is flexible linker. The tract at residues 156–204 (SSNSAEEEAVSALLALGYKPTQASKVVSQIAKPDMSSEQLIREALKSMV) is domain III.

The protein belongs to the RuvA family. Homotetramer. Forms an RuvA(8)-RuvB(12)-Holliday junction (HJ) complex. HJ DNA is sandwiched between 2 RuvA tetramers; dsDNA enters through RuvA and exits via RuvB. An RuvB hexamer assembles on each DNA strand where it exits the tetramer. Each RuvB hexamer is contacted by two RuvA subunits (via domain III) on 2 adjacent RuvB subunits; this complex drives branch migration. In the full resolvosome a probable DNA-RuvA(4)-RuvB(12)-RuvC(2) complex forms which resolves the HJ.

The protein localises to the cytoplasm. Functionally, the RuvA-RuvB-RuvC complex processes Holliday junction (HJ) DNA during genetic recombination and DNA repair, while the RuvA-RuvB complex plays an important role in the rescue of blocked DNA replication forks via replication fork reversal (RFR). RuvA specifically binds to HJ cruciform DNA, conferring on it an open structure. The RuvB hexamer acts as an ATP-dependent pump, pulling dsDNA into and through the RuvAB complex. HJ branch migration allows RuvC to scan DNA until it finds its consensus sequence, where it cleaves and resolves the cruciform DNA. This chain is Holliday junction branch migration complex subunit RuvA, found in Vibrio parahaemolyticus serotype O3:K6 (strain RIMD 2210633).